The primary structure comprises 155 residues: SsrA-binding protein (155 aa).

The segment covering Thr-135 to Lys-147 has biased composition (basic and acidic residues). Residues Thr-135 to Arg-155 form a disordered region.

This sequence belongs to the SmpB family.

The protein resides in the cytoplasm. Its function is as follows. Required for rescue of stalled ribosomes mediated by trans-translation. Binds to transfer-messenger RNA (tmRNA), required for stable association of tmRNA with ribosomes. tmRNA and SmpB together mimic tRNA shape, replacing the anticodon stem-loop with SmpB. tmRNA is encoded by the ssrA gene; the 2 termini fold to resemble tRNA(Ala) and it encodes a 'tag peptide', a short internal open reading frame. During trans-translation Ala-aminoacylated tmRNA acts like a tRNA, entering the A-site of stalled ribosomes, displacing the stalled mRNA. The ribosome then switches to translate the ORF on the tmRNA; the nascent peptide is terminated with the 'tag peptide' encoded by the tmRNA and targeted for degradation. The ribosome is freed to recommence translation, which seems to be the essential function of trans-translation. The chain is SsrA-binding protein from Streptococcus pyogenes serotype M3 (strain SSI-1).